The sequence spans 177 residues: Bifunctional protein PyrR (177 aa).

A PRPP-binding motif is present at residues I101 to T113.

The protein belongs to the purine/pyrimidine phosphoribosyltransferase family. PyrR subfamily.

The catalysed reaction is UMP + diphosphate = 5-phospho-alpha-D-ribose 1-diphosphate + uracil. Regulates the transcription of the pyrimidine nucleotide (pyr) operon in response to exogenous pyrimidines. Its function is as follows. Also displays a weak uracil phosphoribosyltransferase activity which is not physiologically significant. This Endomicrobium trichonymphae protein is Bifunctional protein PyrR.